A 321-amino-acid chain; its full sequence is Digestive cysteine proteinase 3 (321 aa).

Residues 1-16 (MKVAALFLCGLALATA) form the signal peptide. The propeptide at 17-106 (SPSWDHFKTQ…AVFTAEAGPM (90 aa)) is activation peptide. Disulfide bonds link cysteine 127–cysteine 170, cysteine 161–cysteine 203, and cysteine 261–cysteine 310. Residue cysteine 130 is part of the active site. Active-site residues include histidine 268 and asparagine 288.

It belongs to the peptidase C1 family.

Inhibited by E-64, antipain, leupeptin, heavy metal ions, iodoacetic acid, dithionitrobenzene, p-hydroxymercuri-benzoate; activated by mercaptoethanol and dithiothreitol. The polypeptide is Digestive cysteine proteinase 3 (LCP3) (Homarus americanus (American lobster)).